The primary structure comprises 101 residues: Urease subunit beta (101 aa).

The protein belongs to the urease beta subunit family. As to quaternary structure, heterotrimer of UreA (gamma), UreB (beta) and UreC (alpha) subunits. Three heterotrimers associate to form the active enzyme.

Its subcellular location is the cytoplasm. The enzyme catalyses urea + 2 H2O + H(+) = hydrogencarbonate + 2 NH4(+). The protein operates within nitrogen metabolism; urea degradation; CO(2) and NH(3) from urea (urease route): step 1/1. The protein is Urease subunit beta of Sinorhizobium fredii (strain NBRC 101917 / NGR234).